A 320-amino-acid polypeptide reads, in one-letter code: tRNA-cytidine(32) 2-sulfurtransferase (320 aa).

Residues 54–59 carry the PP-loop motif motif; it reads SGGKDS. Residues C129, C132, and C220 each coordinate [4Fe-4S] cluster.

It belongs to the TtcA family. Homodimer. Requires Mg(2+) as cofactor. [4Fe-4S] cluster serves as cofactor.

Its subcellular location is the cytoplasm. It catalyses the reaction cytidine(32) in tRNA + S-sulfanyl-L-cysteinyl-[cysteine desulfurase] + AH2 + ATP = 2-thiocytidine(32) in tRNA + L-cysteinyl-[cysteine desulfurase] + A + AMP + diphosphate + H(+). It functions in the pathway tRNA modification. Its function is as follows. Catalyzes the ATP-dependent 2-thiolation of cytidine in position 32 of tRNA, to form 2-thiocytidine (s(2)C32). The sulfur atoms are provided by the cysteine/cysteine desulfurase (IscS) system. The sequence is that of tRNA-cytidine(32) 2-sulfurtransferase from Bordetella parapertussis (strain 12822 / ATCC BAA-587 / NCTC 13253).